The following is a 677-amino-acid chain: Probable serine/threonine-protein kinase mkcF (677 aa).

In terms of domain architecture, SH3 spans 1-58; sequence MLYLVATGDYKGPSENHLSFTKGQRIEFLERTENGFIKGKLDGKVGIFPSSLITIETR. Residues 72-244 form a disordered region; it reads TETKDDTGSI…SSSSSSTKRR (173 aa). Low complexity predominate over residues 79-94; it reads GSISSSTSTSTSSLTT. Residues 105–126 are compositionally biased toward polar residues; the sequence is GEQQPSTSTINGQSSSTSPILQ. Over residues 127 to 146 the composition is skewed to low complexity; it reads SNGTTNTTTSSTSNNNIGDN. Residues 158–174 are compositionally biased toward polar residues; the sequence is TTSNHSKSASRLSVASF. Positions 175 to 192 are enriched in low complexity; the sequence is STTTTATTTTTTTTTATS. Over residues 209–224 the composition is skewed to basic and acidic residues; sequence DKKSKDDDKSEKEGLY. Over residues 230-240 the composition is skewed to low complexity; the sequence is SSSSSSSSSSS. The 246-residue stretch at 401–646 folds into the Protein kinase domain; the sequence is IKFTHMVGRG…VDKLMRHPFF (246 aa). ATP is bound by residues 407-415 and Lys-428; that span reads VGRGQYGKV. Asp-519 functions as the Proton acceptor in the catalytic mechanism.

Belongs to the protein kinase superfamily. Ser/Thr protein kinase family. STE20 subfamily. The cofactor is Mg(2+).

It carries out the reaction L-seryl-[protein] + ATP = O-phospho-L-seryl-[protein] + ADP + H(+). It catalyses the reaction L-threonyl-[protein] + ATP = O-phospho-L-threonyl-[protein] + ADP + H(+). In Dictyostelium discoideum (Social amoeba), this protein is Probable serine/threonine-protein kinase mkcF.